A 611-amino-acid chain; its full sequence is tRNA uridine 5-carboxymethylaminomethyl modification enzyme MnmG (611 aa).

Residue glycine 12–glycine 17 participates in FAD binding. NAD(+) is bound at residue glycine 271–phenylalanine 285.

Belongs to the MnmG family. Homodimer. Heterotetramer of two MnmE and two MnmG subunits. Requires FAD as cofactor.

The protein localises to the cytoplasm. NAD-binding protein involved in the addition of a carboxymethylaminomethyl (cmnm) group at the wobble position (U34) of certain tRNAs, forming tRNA-cmnm(5)s(2)U34. This is tRNA uridine 5-carboxymethylaminomethyl modification enzyme MnmG from Karelsulcia muelleri (strain GWSS) (Sulcia muelleri).